We begin with the raw amino-acid sequence, 118 residues long: 5-hydroxyisourate hydrolase (118 aa).

His-7, Arg-46, and Tyr-115 together coordinate substrate.

It belongs to the transthyretin family. 5-hydroxyisourate hydrolase subfamily. As to quaternary structure, homotetramer.

It carries out the reaction 5-hydroxyisourate + H2O = 5-hydroxy-2-oxo-4-ureido-2,5-dihydro-1H-imidazole-5-carboxylate + H(+). Catalyzes the hydrolysis of 5-hydroxyisourate (HIU) to 2-oxo-4-hydroxy-4-carboxy-5-ureidoimidazoline (OHCU). This Brucella melitensis biotype 1 (strain ATCC 23456 / CCUG 17765 / NCTC 10094 / 16M) protein is 5-hydroxyisourate hydrolase.